We begin with the raw amino-acid sequence, 669 residues long: Heat shock 70 kDa protein BIP3 (669 aa).

The signal sequence occupies residues 1-32; it reads MARGATWTRRLHLHGLFLAVLLLLTLPAGSTA. Asn-423 carries an N-linked (GlcNAc...) asparagine glycan. Residues 646–669 form a disordered region; sequence AVYQRSGGSRRDGDGGGDDDHDEL. A compositionally biased stretch (acidic residues) spans 660 to 669; it reads GGGDDDHDEL. The short motif at 666–669 is the Prevents secretion from ER element; that stretch reads HDEL.

Belongs to the heat shock protein 70 family.

It is found in the endoplasmic reticulum. Functionally, functions as a chaperone during endoplasmic reticulum (ER) stress response. The polypeptide is Heat shock 70 kDa protein BIP3 (Oryza sativa subsp. japonica (Rice)).